The sequence spans 542 residues: Chaperonin GroEL 3 (542 aa).

Residues 30-33 (TLGP), Lys51, 87-91 (DGTTT), Gly415, and Asp494 contribute to the ATP site. Residues 523–542 (KPKKKEPPMPAMPSDMGDYD) form a disordered region.

This sequence belongs to the chaperonin (HSP60) family. In terms of assembly, forms a cylinder of 14 subunits composed of two heptameric rings stacked back-to-back. Interacts with the co-chaperonin GroES.

The protein localises to the cytoplasm. The catalysed reaction is ATP + H2O + a folded polypeptide = ADP + phosphate + an unfolded polypeptide.. Functionally, together with its co-chaperonin GroES, plays an essential role in assisting protein folding. The GroEL-GroES system forms a nano-cage that allows encapsulation of the non-native substrate proteins and provides a physical environment optimized to promote and accelerate protein folding. The sequence is that of Chaperonin GroEL 3 from Syntrophus aciditrophicus (strain SB).